The sequence spans 272 residues: Magnetosome protein MamQ 1 (272 aa).

Topologically, residues 1–46 (MALGDANVGSAPGVDFSALQRVKQSEELLAQLYVVEETPRRLGRGP) are cytoplasmic. Residues 47–67 (VHALMVISVLSVVAFIATLLM) traverse the membrane as a helical segment. At 68 to 272 (RYNTFVTMSE…PLNHAQDIKK (205 aa)) the chain is on the lumenal side.

The protein belongs to the LemA family.

It localises to the magnetosome membrane. Its function is as follows. Essential for magnetosome formation. Can be used to induce magnetosome formation. The sequence is that of Magnetosome protein MamQ 1 (mamQ1) from Paramagnetospirillum magneticum (strain ATCC 700264 / AMB-1) (Magnetospirillum magneticum).